A 360-amino-acid polypeptide reads, in one-letter code: Malonyl CoA-acyl carrier protein transacylase, mitochondrial (360 aa).

Residues 1 to 24 constitute a mitochondrion transit peptide; sequence MKLLTFPGQGTSISISILKAIIRN. Residues Ser105 and His235 contribute to the active site.

This sequence belongs to the FabD family.

The protein localises to the mitochondrion. The enzyme catalyses holo-[ACP] + malonyl-CoA = malonyl-[ACP] + CoA. The protein operates within lipid metabolism; fatty acid biosynthesis. Involved in biosynthesis of fatty acids in mitochondria. This Saccharomyces cerevisiae (strain ATCC 204508 / S288c) (Baker's yeast) protein is Malonyl CoA-acyl carrier protein transacylase, mitochondrial (MCT1).